We begin with the raw amino-acid sequence, 243 residues long: MLFALPALNDNYIWLYQRENLPLIIVDLPETDKLFAWLDKQNATVEAVLLTHEHDDHTQGVSAFKKRYPTVPIYGPQECEKKGATQIVNEGKILTANYQIDVIPTGGHTKQHVSFLVDNHLFCGDALFSAGCGRVFTGNYALMFEGLQRLNTLPDETIVCPAHEYTLGNLAFAETVLVDKSAVEKSAVEKSAVEKQRIFVETQRAENKPSLPTTLKLEREINPFLQAKTLEEFTALRKAKDIF.

Zn(2+) contacts are provided by H52, H54, D56, H57, H108, D125, and H163.

Belongs to the metallo-beta-lactamase superfamily. Glyoxalase II family. In terms of assembly, monomer. Zn(2+) is required as a cofactor.

It catalyses the reaction an S-(2-hydroxyacyl)glutathione + H2O = a 2-hydroxy carboxylate + glutathione + H(+). Its pathway is secondary metabolite metabolism; methylglyoxal degradation; (R)-lactate from methylglyoxal: step 2/2. In terms of biological role, thiolesterase that catalyzes the hydrolysis of S-D-lactoyl-glutathione to form glutathione and D-lactic acid. This chain is Hydroxyacylglutathione hydrolase, found in Haemophilus influenzae (strain PittGG).